Reading from the N-terminus, the 517-residue chain is PSTB2-interacting protein 1 (517 aa).

In terms of assembly, interacts with PDR17/PSTB2 and SCS2.

Phosphatidic acid-binding protein involved in interorganelle phosphatidylserine (PtdSer) transport. Linkks a PtdSer donor membrane (via binding of SCS2 and phosphatidic acid present in the donor membrane) with an acceptor membrane (via its interaction with PDR17), forming a zone of apposition that facilitates PtdSer transfer. The polypeptide is PSTB2-interacting protein 1 (Saccharomyces cerevisiae (strain ATCC 204508 / S288c) (Baker's yeast)).